The sequence spans 385 residues: Transcription termination factor 2, mitochondrial (385 aa).

A mitochondrion-targeting transit peptide spans 1–35; that stretch reads MLWKLLLRSQSCRLCSFRKMRSPPKYRPFLACFTY.

The protein belongs to the mTERF family. Monomer. As to expression, expressed in skeletal muscle, heart, liver and pancreas.

The protein localises to the mitochondrion. It is found in the mitochondrion matrix. Its subcellular location is the mitochondrion nucleoid. Its function is as follows. Binds mitochondrial DNA and plays a role in the regulation of transcription of mitochondrial mRNA and rRNA species. The protein is Transcription termination factor 2, mitochondrial (MTERF2) of Homo sapiens (Human).